A 135-amino-acid polypeptide reads, in one-letter code: Ribonuclease P protein component (135 aa).

It belongs to the RnpA family. In terms of assembly, consists of a catalytic RNA component (M1 or rnpB) and a protein subunit.

It catalyses the reaction Endonucleolytic cleavage of RNA, removing 5'-extranucleotides from tRNA precursor.. In terms of biological role, RNaseP catalyzes the removal of the 5'-leader sequence from pre-tRNA to produce the mature 5'-terminus. It can also cleave other RNA substrates such as 4.5S RNA. The protein component plays an auxiliary but essential role in vivo by binding to the 5'-leader sequence and broadening the substrate specificity of the ribozyme. This is Ribonuclease P protein component from Saccharophagus degradans (strain 2-40 / ATCC 43961 / DSM 17024).